The sequence spans 1284 residues: DNA-directed RNA polymerase subunit beta (1284 aa).

This sequence belongs to the RNA polymerase beta chain family. The RNAP catalytic core consists of 2 alpha, 1 beta, 1 beta' and 1 omega subunit. When a sigma factor is associated with the core the holoenzyme is formed, which can initiate transcription.

It catalyses the reaction RNA(n) + a ribonucleoside 5'-triphosphate = RNA(n+1) + diphosphate. In terms of biological role, DNA-dependent RNA polymerase catalyzes the transcription of DNA into RNA using the four ribonucleoside triphosphates as substrates. This Mesoplasma florum (strain ATCC 33453 / NBRC 100688 / NCTC 11704 / L1) (Acholeplasma florum) protein is DNA-directed RNA polymerase subunit beta.